The sequence spans 314 residues: Acetyl-coenzyme A carboxylase carboxyl transferase subunit beta, chloroplastic (314 aa).

The CoA carboxyltransferase N-terminal domain occupies 47 to 314 (LWTRCDNCEN…APWKEKNNQV (268 aa)). The Zn(2+) site is built by C51, C54, C70, and C73. The C4-type zinc-finger motif lies at 51-73 (CDNCENMLYIKFLKQNKGVCEEC).

The protein belongs to the AccD/PCCB family. As to quaternary structure, acetyl-CoA carboxylase is a heterohexamer composed of biotin carboxyl carrier protein, biotin carboxylase and 2 subunits each of ACCase subunit alpha and ACCase plastid-coded subunit beta (accD). Requires Zn(2+) as cofactor.

The protein resides in the plastid. Its subcellular location is the chloroplast stroma. The catalysed reaction is N(6)-carboxybiotinyl-L-lysyl-[protein] + acetyl-CoA = N(6)-biotinyl-L-lysyl-[protein] + malonyl-CoA. The protein operates within lipid metabolism; malonyl-CoA biosynthesis; malonyl-CoA from acetyl-CoA: step 1/1. Its function is as follows. Component of the acetyl coenzyme A carboxylase (ACC) complex. Biotin carboxylase (BC) catalyzes the carboxylation of biotin on its carrier protein (BCCP) and then the CO(2) group is transferred by the transcarboxylase to acetyl-CoA to form malonyl-CoA. The polypeptide is Acetyl-coenzyme A carboxylase carboxyl transferase subunit beta, chloroplastic (Angiopteris lygodiifolia (Turnip fern)).